A 185-amino-acid chain; its full sequence is MNGIAWMIVFCEIAFWVVIVLGLAVRYVFKRHTLGLLFLALTPVIDLILLAATGVDLYRGASATAAHGIAAVYIGISIAYGKQMIQWADEKFQYYVTKKGTKPLKRFGMDHAKHGAKGWLRHVLAYLIGAGLLAGMIYFINDSSRTEALSGILKLWTVIIGIDFLITASYFIWPKKEKASANLRS.

The next 5 membrane-spanning stretches (helical) occupy residues 4 to 24 (IAWMIVFCEIAFWVVIVLGLA), 35 to 55 (GLLFLALTPVIDLILLAATGV), 60 to 80 (GASATAAHGIAAVYIGISIAY), 123 to 143 (VLAYLIGAGLLAGMIYFINDS), and 152 to 172 (ILKLWTVIIGIDFLITASYFI).

The protein localises to the cell membrane. This is an uncharacterized protein from Bacillus subtilis (strain 168).